Reading from the N-terminus, the 414-residue chain is Serine/arginine (SR)-type shuttling mRNA binding protein NPL3 (414 aa).

Over residues 1 to 11 the composition is skewed to basic and acidic residues; that stretch reads MSEAQETHVEQ. The interval 1–119 is disordered; that stretch reads MSEAQETHVE…GRPPMHHRQE (119 aa). Ser-15 carries the post-translational modification Phosphoserine. Over residues 33 to 51 the composition is skewed to low complexity; it reads DAPQEPQVPQESAPQESAP. Pro residues predominate over residues 52–68; it reads QEPPAPQEQNDVPPPSN. Basic and acidic residues predominate over residues 75–92; it reads EESHSVQDYQEAHQHHQP. Phosphoserine is present on Ser-79. A compositionally biased stretch (pro residues) spans 93-105; it reads PEPQPYYPPPPPG. 2 consecutive RRM domains span residues 125 to 195 and 200 to 275; these read TRLF…YSKL and YRIT…RDDN. A phosphoserine mark is found at Ser-182, Ser-212, and Ser-224. Residues 269–299 form a disordered region; sequence TVERDDNPPPIRRSNRGGFRGRGGFRGGFRG. The segment covering 286-299 has biased composition (gly residues); that stretch reads GFRGRGGFRGGFRG. Residues Arg-288, Arg-290, Arg-294, and Arg-298 each carry the dimethylated arginine modification. Residue Arg-302 is modified to Omega-N-methylarginine. Dimethylated arginine; alternate occurs at positions 307 and 314. Residues Arg-307 and Arg-314 each carry the omega-N-methylarginine; alternate modification. Omega-N-methylarginine is present on residues Arg-321, Arg-329, Arg-337, and Arg-344. The interval 343 to 414 is disordered; that stretch reads SRGGYDSPRG…DAPRERSPTR (72 aa). A compositionally biased stretch (low complexity) spans 346 to 360; sequence GYDSPRGGYDSPRGG. Residue Arg-351 is modified to Dimethylated arginine; alternate. Arg-351 is subject to Omega-N-methylarginine; alternate. A Phosphoserine modification is found at Ser-356. Residues Arg-358, Arg-363, Arg-377, and Arg-384 each carry the dimethylated arginine; alternate modification. Arg-358, Arg-363, Arg-377, and Arg-384 each carry omega-N-methylarginine; alternate. The segment covering 379–389 has biased composition (gly residues); sequence SYGGSRGGYDG. Arg-391 is subject to Omega-N-methylarginine. Positions 399-414 are enriched in basic and acidic residues; the sequence is DAYRTRDAPRERSPTR.

Belongs to the RRM GAR family. Interacts with RRP6. In terms of processing, methylated by HMT1. The methylation is required for nuclear export.

The protein localises to the cytoplasm. Its subcellular location is the nucleus. It is found in the stress granule. Its function is as follows. Involved in mRNA processing and export. Required for efficient splicing of a large set of pre-mRNAs by efficient co-transcriptional recruitment of the splicing machinery. Remains associated with the mRNP during early steps of translation elongation. The chain is Serine/arginine (SR)-type shuttling mRNA binding protein NPL3 from Saccharomyces cerevisiae (strain ATCC 204508 / S288c) (Baker's yeast).